Reading from the N-terminus, the 377-residue chain is Anhydro-N-acetylmuramic acid kinase (377 aa).

12–19 is an ATP binding site; the sequence is GTSLDGID.

The protein belongs to the anhydro-N-acetylmuramic acid kinase family.

The catalysed reaction is 1,6-anhydro-N-acetyl-beta-muramate + ATP + H2O = N-acetyl-D-muramate 6-phosphate + ADP + H(+). It participates in amino-sugar metabolism; 1,6-anhydro-N-acetylmuramate degradation. The protein operates within cell wall biogenesis; peptidoglycan recycling. Functionally, catalyzes the specific phosphorylation of 1,6-anhydro-N-acetylmuramic acid (anhMurNAc) with the simultaneous cleavage of the 1,6-anhydro ring, generating MurNAc-6-P. Is required for the utilization of anhMurNAc either imported from the medium or derived from its own cell wall murein, and thus plays a role in cell wall recycling. The sequence is that of Anhydro-N-acetylmuramic acid kinase from Methylorubrum populi (strain ATCC BAA-705 / NCIMB 13946 / BJ001) (Methylobacterium populi).